The sequence spans 243 residues: Bidirectional sugar transporter SWEET2a (243 aa).

Over 1-23 the chain is Extracellular; that stretch reads MDWAAPALTSFVADSSYRHLCCY. Residues 24-44 traverse the membrane as a helical segment; that stretch reads GAGIAGNVFAFVLFISPLPTF. Residues 24–111 enclose the MtN3/slv 1 domain; it reads GAGIAGNVFA…AVFIAFADAK (88 aa). Topologically, residues 45–57 are cytoplasmic; sequence KRIVRNGSTEQFS. A helical transmembrane segment spans residues 58-80; that stretch reads AMPYIYSLLNCLICMWYGLPFVS. At 81–89 the chain is on the extracellular side; the sequence is YGVVLVATV. A helical transmembrane segment spans residues 90–110; the sequence is NSIGAVFQLAYTAVFIAFADA. Residues 111-117 lie on the Cytoplasmic side of the membrane; the sequence is KQRLKVS. A helical membrane pass occupies residues 118–138; sequence ALLAAVFVVFGLIVFVSLALL. Residues 139–145 lie on the Extracellular side of the membrane; that stretch reads DHPTRQM. A helical membrane pass occupies residues 146-166; that stretch reads FVGYLSVASLIFMFASPLSII. The 84-residue stretch at 147-230 folds into the MtN3/slv 2 domain; it reads VGYLSVASLI…VLYAYFRKGS (84 aa). The Cytoplasmic segment spans residues 167–179; it reads NLVIRTKSVEYMP. A helical transmembrane segment spans residues 180-200; that stretch reads FYLSLSMFLMSASFFGYGVLL. Residues 201 to 202 are Extracellular-facing; the sequence is ND. Residues 203–223 form a helical membrane-spanning segment; it reads FFIYIPNGIGTILGIIQLVLY. Residues 224–243 are Cytoplasmic-facing; that stretch reads AYFRKGSSEEAKLPLLVTHT.

The protein belongs to the SWEET sugar transporter family. In terms of assembly, forms homooligomers and/or heterooligomers.

Its subcellular location is the cell membrane. Its function is as follows. Mediates both low-affinity uptake and efflux of sugar across the plasma membrane. The chain is Bidirectional sugar transporter SWEET2a from Sorghum bicolor (Sorghum).